Consider the following 404-residue polypeptide: Probable tRNA sulfurtransferase (404 aa).

Residues 61-166 (EAISERLKDV…SGYSYIMCGE (106 aa)) enclose the THUMP domain. Residues 184-185 (LL), 209-210 (HF), Arg-266, Gly-288, and Gln-297 each bind ATP.

The protein belongs to the ThiI family.

It localises to the cytoplasm. It carries out the reaction [ThiI sulfur-carrier protein]-S-sulfanyl-L-cysteine + a uridine in tRNA + 2 reduced [2Fe-2S]-[ferredoxin] + ATP + H(+) = [ThiI sulfur-carrier protein]-L-cysteine + a 4-thiouridine in tRNA + 2 oxidized [2Fe-2S]-[ferredoxin] + AMP + diphosphate. The catalysed reaction is [ThiS sulfur-carrier protein]-C-terminal Gly-Gly-AMP + S-sulfanyl-L-cysteinyl-[cysteine desulfurase] + AH2 = [ThiS sulfur-carrier protein]-C-terminal-Gly-aminoethanethioate + L-cysteinyl-[cysteine desulfurase] + A + AMP + 2 H(+). The protein operates within cofactor biosynthesis; thiamine diphosphate biosynthesis. Its function is as follows. Catalyzes the ATP-dependent transfer of a sulfur to tRNA to produce 4-thiouridine in position 8 of tRNAs, which functions as a near-UV photosensor. Also catalyzes the transfer of sulfur to the sulfur carrier protein ThiS, forming ThiS-thiocarboxylate. This is a step in the synthesis of thiazole, in the thiamine biosynthesis pathway. The sulfur is donated as persulfide by IscS. This Bacillus cereus (strain G9842) protein is Probable tRNA sulfurtransferase.